Reading from the N-terminus, the 556-residue chain is Formate--tetrahydrofolate ligase (556 aa).

65-72 (TPAGEGKT) is a binding site for ATP.

Belongs to the formate--tetrahydrofolate ligase family.

The catalysed reaction is (6S)-5,6,7,8-tetrahydrofolate + formate + ATP = (6R)-10-formyltetrahydrofolate + ADP + phosphate. The protein operates within one-carbon metabolism; tetrahydrofolate interconversion. The protein is Formate--tetrahydrofolate ligase of Clostridium acidurici (Gottschalkia acidurici).